We begin with the raw amino-acid sequence, 145 residues long: Transthyretin (145 aa).

Residues 1 to 20 form the signal peptide; the sequence is MASHRLFLLCLAGLVFMSEA. At Cys-28 the chain carries Sulfocysteine. Residue Lys-33 coordinates L-thyroxine. Glu-60 bears the 4-carboxyglutamate mark. Ser-70 carries the post-translational modification Phosphoserine. Glu-72 is an L-thyroxine binding site. The N-linked (GlcNAc...) asparagine glycan is linked to Asn-116. Ser-135 lines the L-thyroxine pocket.

This sequence belongs to the transthyretin family. In terms of assembly, homotetramer. Dimer of dimers. In the homotetramer, subunits assemble around a central channel that can accommodate two ligand molecules. Interacts with RBP4. Post-translationally, sulfonation of the reactive cysteine Cys-28 enhances the stability of the native conformation of TTR, avoiding misassembly of the protein leading to amyloid formation.

It is found in the secreted. Thyroid hormone-binding protein. Probably transports thyroxine from the bloodstream to the brain. This chain is Transthyretin (TTR), found in Erinaceus europaeus (Western European hedgehog).